A 77-amino-acid chain; its full sequence is Small ribosomal subunit protein bS18 (77 aa).

The protein belongs to the bacterial ribosomal protein bS18 family. As to quaternary structure, part of the 30S ribosomal subunit. Forms a tight heterodimer with protein bS6.

Functionally, binds as a heterodimer with protein bS6 to the central domain of the 16S rRNA, where it helps stabilize the platform of the 30S subunit. This is Small ribosomal subunit protein bS18 from Lactobacillus gasseri (strain ATCC 33323 / DSM 20243 / BCRC 14619 / CIP 102991 / JCM 1131 / KCTC 3163 / NCIMB 11718 / NCTC 13722 / AM63).